The primary structure comprises 234 residues: Protein-toxin resistance protein KTD1 (234 aa).

Over 1 to 47 (MQTPSENTDVKMDTLDEPSAHLIEENVALPEDTFSSHLSYVLYEIAH) the chain is Cytoplasmic. Residues 48–68 (CKPIMFMIIIIVSLISLIVLF) traverse the membrane as a helical segment. Residues 68–75 (FHDNDGCT) form a required for resistance to killer toxin K28, a protein-toxin encoded by the M28 virus region. The Extracellular portion of the chain corresponds to 69-76 (HDNDGCTV). Residues 77–97 (ILVMSLIVASMALMVVAAFTF) form a helical membrane-spanning segment. The Cytoplasmic portion of the chain corresponds to 98-234 (GKAITEQEFM…RKQYPDADLP (137 aa)). Residues 147 to 234 (FYSGKKCHEF…RKQYPDADLP (88 aa)) form a required for resistance to killer toxin K28, a protein-toxin encoded by the M28 virus region. Residues 168–187 (SHSDSSSNSAEDTQSPVSAG) form a disordered region. Residues 177–187 (AEDTQSPVSAG) show a composition bias toward polar residues. K217 participates in a covalent cross-link: Glycyl lysine isopeptide (Lys-Gly) (interchain with G-Cter in ubiquitin).

Belongs to the DUP/COS family.

It localises to the vacuole membrane. It is found in the golgi apparatus. The protein localises to the trans-Golgi network membrane. Its subcellular location is the endosome membrane. Its function is as follows. Confers resistance to killer toxin K28, a protein-toxin encoded by the M28 virus that uses S.cerevisiae as a host. Probably acts against K28 after endocytosis of the protein-toxin. In Saccharomyces cerevisiae (strain ATCC 204508 / S288c) (Baker's yeast), this protein is Protein-toxin resistance protein KTD1.